We begin with the raw amino-acid sequence, 337 residues long: Glycerol-3-phosphate dehydrogenase [NAD(P)+] 2 (337 aa).

Residues Thr-11, Trp-12, and Lys-105 each coordinate NADPH. Residues Lys-105, Gly-139, and Thr-141 each contribute to the sn-glycerol 3-phosphate site. Ala-143 provides a ligand contact to NADPH. Sn-glycerol 3-phosphate contacts are provided by Lys-194, Asp-247, Ser-257, Arg-258, and Asn-259. Lys-194 acts as the Proton acceptor in catalysis. Arg-258 contacts NADPH. Residues Val-282 and Glu-284 each coordinate NADPH.

It belongs to the NAD-dependent glycerol-3-phosphate dehydrogenase family.

It is found in the cytoplasm. The catalysed reaction is sn-glycerol 3-phosphate + NAD(+) = dihydroxyacetone phosphate + NADH + H(+). The enzyme catalyses sn-glycerol 3-phosphate + NADP(+) = dihydroxyacetone phosphate + NADPH + H(+). The protein operates within membrane lipid metabolism; glycerophospholipid metabolism. Its function is as follows. Catalyzes the reduction of the glycolytic intermediate dihydroxyacetone phosphate (DHAP) to sn-glycerol 3-phosphate (G3P), the key precursor for phospholipid synthesis. This is Glycerol-3-phosphate dehydrogenase [NAD(P)+] 2 from Lactobacillus delbrueckii subsp. bulgaricus (strain ATCC 11842 / DSM 20081 / BCRC 10696 / JCM 1002 / NBRC 13953 / NCIMB 11778 / NCTC 12712 / WDCM 00102 / Lb 14).